A 547-amino-acid chain; its full sequence is Chaperonin GroEL (547 aa).

ATP contacts are provided by residues 30–33 (TLGP), K51, 87–91 (DGTTT), G415, and D496. The disordered stretch occupies residues 528–547 (KEEPMPMRGSGMGGMGGMDF). Residues 537–547 (SGMGGMGGMDF) are compositionally biased toward gly residues.

The protein belongs to the chaperonin (HSP60) family. Forms a cylinder of 14 subunits composed of two heptameric rings stacked back-to-back. Interacts with the co-chaperonin GroES.

It is found in the cytoplasm. The enzyme catalyses ATP + H2O + a folded polypeptide = ADP + phosphate + an unfolded polypeptide.. In terms of biological role, together with its co-chaperonin GroES, plays an essential role in assisting protein folding. The GroEL-GroES system forms a nano-cage that allows encapsulation of the non-native substrate proteins and provides a physical environment optimized to promote and accelerate protein folding. The protein is Chaperonin GroEL of Rickettsia canadensis (strain McKiel).